We begin with the raw amino-acid sequence, 607 residues long: 2-isopropylmalate synthase (607 aa).

The segment covering 1–10 (MASFSESLSQ) has biased composition (polar residues). Residues 1–40 (MASFSESLSQDPADAYKSAPSITKPMGPPSPGQPQWNPQR) form a disordered region. Positions 75–349 (PLWCAVDLRD…DPQIDFSNID (275 aa)) constitute a Pyruvate carboxyltransferase domain. Mg(2+) is bound by residues Asp-84, His-288, His-290, and Asn-324. Residues 491–607 (PVQPLERIKQ…VSAVNRAMPR (117 aa)) form a regulatory domain region.

This sequence belongs to the alpha-IPM synthase/homocitrate synthase family. LeuA type 2 subfamily. In terms of assembly, homodimer. It depends on Mg(2+) as a cofactor.

The protein resides in the cytoplasm. It catalyses the reaction 3-methyl-2-oxobutanoate + acetyl-CoA + H2O = (2S)-2-isopropylmalate + CoA + H(+). Its pathway is amino-acid biosynthesis; L-leucine biosynthesis; L-leucine from 3-methyl-2-oxobutanoate: step 1/4. Functionally, catalyzes the condensation of the acetyl group of acetyl-CoA with 3-methyl-2-oxobutanoate (2-ketoisovalerate) to form 3-carboxy-3-hydroxy-4-methylpentanoate (2-isopropylmalate). The chain is 2-isopropylmalate synthase from Mycobacterium leprae (strain TN).